Consider the following 304-residue polypeptide: Probable 5-dehydro-4-deoxyglucarate dehydratase (304 aa).

The protein belongs to the DapA family.

It catalyses the reaction 5-dehydro-4-deoxy-D-glucarate + H(+) = 2,5-dioxopentanoate + CO2 + H2O. Its pathway is carbohydrate acid metabolism; D-glucarate degradation; 2,5-dioxopentanoate from D-glucarate: step 2/2. This is Probable 5-dehydro-4-deoxyglucarate dehydratase from Methylobacterium radiotolerans (strain ATCC 27329 / DSM 1819 / JCM 2831 / NBRC 15690 / NCIMB 10815 / 0-1).